We begin with the raw amino-acid sequence, 78 residues long: MMENNKRKRKARKKICVFCADKSKNIDYKDVHKLKKYITERGKILPRRISGNCAIHQRELTQAIKRSRHIALLPYTMD.

It belongs to the bacterial ribosomal protein bS18 family. Part of the 30S ribosomal subunit. Forms a tight heterodimer with protein bS6.

Its function is as follows. Binds as a heterodimer with protein bS6 to the central domain of the 16S rRNA, where it helps stabilize the platform of the 30S subunit. This chain is Small ribosomal subunit protein bS18, found in Alkaliphilus oremlandii (strain OhILAs) (Clostridium oremlandii (strain OhILAs)).